The sequence spans 396 residues: Cathepsin D (396 aa).

Positions 1 to 18 (MKMLLLCVFSALALTNDA) are cleaved as a signal peptide. Residues 19-61 (LVRIPLKKFRSIRRQLTDSGKRAEELLADHHSLKYNLSFPASN) constitute a propeptide, activation peptide. The 318-residue stretch at 76-393 (YYGEIGLGTP…DRDANRVGFA (318 aa)) folds into the Peptidase A1 domain. The active site involves Asp94. A disulfide bridge links Cys107 with Cys114. Residues Asn131 and Asn249 are each glycosylated (N-linked (GlcNAc...) asparagine). An intrachain disulfide couples Cys272 to Cys276. Asp281 is a catalytic residue. A disulfide bridge connects residues Cys315 and Cys352.

This sequence belongs to the peptidase A1 family. Monomer.

It localises to the lysosome. The enzyme catalyses Specificity similar to, but narrower than, that of pepsin A. Does not cleave the 4-Gln-|-His-5 bond in B chain of insulin.. With respect to regulation, inhibited by pepstatin. Its function is as follows. Acid protease active in intracellular protein breakdown. This Chionodraco hamatus (Antarctic teleost icefish) protein is Cathepsin D (ctsd).